The sequence spans 260 residues: Indole-3-glycerol phosphate synthase (260 aa).

This sequence belongs to the TrpC family.

It carries out the reaction 1-(2-carboxyphenylamino)-1-deoxy-D-ribulose 5-phosphate + H(+) = (1S,2R)-1-C-(indol-3-yl)glycerol 3-phosphate + CO2 + H2O. It participates in amino-acid biosynthesis; L-tryptophan biosynthesis; L-tryptophan from chorismate: step 4/5. This chain is Indole-3-glycerol phosphate synthase, found in Neisseria meningitidis serogroup B (strain ATCC BAA-335 / MC58).